The chain runs to 182 residues: Putative CTD phosphatase-like protein 355R (182 aa).

The FCP1 homology domain occupies 1–180 (MKNIFLDLDN…MRLKDVLNRH (180 aa)).

The protein belongs to the IIV-6 355R family.

Functionally, may function as a phosphatase. In Invertebrate iridescent virus 6 (IIV-6), this protein is Putative CTD phosphatase-like protein 355R.